The primary structure comprises 110 residues: Parvalbumin alpha (110 aa).

Ser-2 is modified (N-acetylserine). Phosphoserine occurs at positions 2 and 24. 2 consecutive EF-hand domains span residues 39-74 (KSAD…FSPD) and 78-110 (LSAK…VAES). Residues Asp-52, Asp-54, Ser-56, Phe-58, Glu-60, Glu-63, Asp-91, Asp-93, Asp-95, Lys-97, and Glu-102 each coordinate Ca(2+).

This sequence belongs to the parvalbumin family.

In terms of biological role, in muscle, parvalbumin is thought to be involved in relaxation after contraction. It binds two calcium ions. This chain is Parvalbumin alpha (PVALB), found in Macaca fuscata fuscata (Japanese macaque).